We begin with the raw amino-acid sequence, 824 residues long: Glycophorin-binding protein 130 (824 aa).

The PEXEL motif signature appears at 84 to 88; sequence RILAE. 11 disordered regions span residues 97–236, 258–291, 310–334, 358–384, 408–431, 457–482, 507–532, 559–582, 659–683, 711–733, and 759–783; these read EKTT…GQIM, NTDPNDEVERRNADNKEDLTSADPEGQIMREYAS, DPNDDVERRNADNKEDLTSADPEGQ, NTDPNDEVERRNADNKEDLTSADPEGQ, NTDPNDEVERRNADNKELTSSDPE, NTDPNDEVERRNADNKEDLTSADPEG, DPNDEVERRNADNKEDLTSADPEG, DPNDEVERRNADNKEDLTSADPEGQ, and NDEVERRNADNKEDLTSADPEGQ. Composition is skewed to basic and acidic residues over residues 117–140 and 174–198; these read TKKDEENKSVVTEEQKVESDSEKQ and KKEESGKPEENKHANEASKKQEPKA. Residues 200 to 228 are compositionally biased toward polar residues; the sequence is KVSQKPSTSTRSNNEVKIRAASNQETLTS. 12 GBP repeats span residues 226 to 275, 276 to 325, 326 to 375, 376 to 424, 425 to 474, 475 to 524, 525 to 574, 575 to 624, 625 to 674, 675 to 724, 725 to 774, and 775 to 824; these read LTSA…NKED, LTSA…DNKE, LTSS…NKED, LTSA…NKEE, and LTSA…NNEA. Basic and acidic residues-rich tracts occupy residues 264 to 276, 314 to 326, 364 to 376, 414 to 426, 463 to 475, 513 to 525, 563 to 575, 663 to 675, 713 to 725, and 763 to 775; these read EVERRNADNKEDL, DVERRNADNKEDL, and EVERRNADNKELT.

In terms of assembly, interacts with host glycophorin.

It is found in the secreted. Its subcellular location is the cell surface. The protein localises to the host cytoplasm. Involved in merozoite invasion of host erythrocytes. In Plasmodium falciparum (isolate 3D7), this protein is Glycophorin-binding protein 130.